A 1865-amino-acid chain; its full sequence is Dedicator of cytokinesis protein 1 (1865 aa).

Positions Arg-9–Ala-70 constitute an SH3 domain. The C2 DOCK-type domain maps to Arg-425–Cys-609. The region spanning Tyr-1207 to Met-1617 is the DOCKER domain. The interval Gly-1613–Gln-1723 is disordered. Over residues Pro-1639 to Ser-1664 the composition is skewed to low complexity. The span at Arg-1680 to Lys-1694 shows a compositional bias: basic and acidic residues. Ser-1681 carries the post-translational modification Phosphoserine. The segment at Lys-1687 to Lys-1695 is phosphoinositide-binding. Basic residues predominate over residues Lys-1695–Ser-1704. Basic and acidic residues predominate over residues Lys-1705–Pro-1716. Phosphoserine occurs at positions 1743, 1756, 1761, and 1764. Disordered stretches follow at residues Arg-1753–Ser-1778 and Pro-1801–Gln-1865. Residues Ser-1756–Gln-1766 show a composition bias toward low complexity. Phosphothreonine occurs at positions 1767 and 1772. The interval Met-1793–Asp-1819 is interaction with NCK2 second and third SH3 domain (minor). Positions Pro-1799 to Lys-1805 match the SH3-binding; interaction with CRK motif. The segment at Met-1820–Gln-1836 is interaction with NCK2 third SH3 domain (major). Residues Thr-1825–Lys-1851 are compositionally biased toward pro residues. An interaction with NCK2 (minor) region spans residues Pro-1837–Thr-1852. The SH3-binding; interaction with CRK motif lies at Pro-1838–Lys-1843. Ser-1858 carries the phosphoserine modification.

Belongs to the DOCK family. In terms of assembly, interacts with the SH3 domains of CRK and NCK2 via multiple sites. Interacts with nucleotide-free RAC1 via its DOCKER domain. Interacts with ELMO1, ELMO2 and probably ELMO3 via its SH3 domain. Interacts with RAC1. Interacts with ELMO1 and ADGRB1. Identified in a complex with AUTS2 and ELMO2.

It is found in the cytoplasm. It localises to the membrane. In terms of biological role, involved in cytoskeletal rearrangements required for phagocytosis of apoptotic cells and cell motility. Along with DOCK1, mediates CRK/CRKL regulation of epithelial and endothelial cell spreading and migration on type IV collagen. Functions as a guanine nucleotide exchange factor (GEF), which activates Rac Rho small GTPases by exchanging bound GDP for free GTP. Its GEF activity may be enhanced by ELMO1. The chain is Dedicator of cytokinesis protein 1 (Dock1) from Mus musculus (Mouse).